Here is a 346-residue protein sequence, read N- to C-terminus: MDIKKAIAAVVERQDLSGGEMQVVMHDIMTGKATPAQIGGFLIGLRMKGETVEEITAAAQVMRSLSSKVHLDLEHVVDTCGTGGDGGNLFNVSTASAFVVASAGGKVAKHGGRSVSSKSGSADVLEQAGIYLGLDAEQVCRCVEEIGLGFMFAPNHHSAMKYAVGPRKEMATRTIFNLLGPLTNPANAKCQVMGVFHQKWVRPIAEVLKALGSEHVMVVHSEDGLDEISIAAPTYVAELKNGEILEYKISPEDFGIPLQSIDTIQAADASESLALVKMALDGKGKINPARDIVALNAGAAIYVSGIADTLAEGVNIAEDVIGGGTAKVKMSELASFTRCFMSPDSL.

5-phospho-alpha-D-ribose 1-diphosphate contacts are provided by residues glycine 81, 84–85, 91–94, 109–117, and serine 121; these read GD, NVST, and KHGGRSVSS. Glycine 81 provides a ligand contact to anthranilate. Position 93 (serine 93) interacts with Mg(2+). Arginine 167 is a binding site for anthranilate. Mg(2+)-binding residues include aspartate 226 and glutamate 227.

The protein belongs to the anthranilate phosphoribosyltransferase family. Homodimer. Mg(2+) is required as a cofactor.

It carries out the reaction N-(5-phospho-beta-D-ribosyl)anthranilate + diphosphate = 5-phospho-alpha-D-ribose 1-diphosphate + anthranilate. It functions in the pathway amino-acid biosynthesis; L-tryptophan biosynthesis; L-tryptophan from chorismate: step 2/5. Functionally, catalyzes the transfer of the phosphoribosyl group of 5-phosphorylribose-1-pyrophosphate (PRPP) to anthranilate to yield N-(5'-phosphoribosyl)-anthranilate (PRA). This is Anthranilate phosphoribosyltransferase from Marinomonas sp. (strain MWYL1).